The sequence spans 3112 residues: Genome polyprotein (3112 aa).

The Peptidase S30 domain occupies 234–383 (KLTQRRANKI…PDCLEGLTYY (150 aa)). Active-site for P1 proteinase activity residues include His286, Asp301, and Ser333. Residues 729–850 (TLVPKSGFCY…IETFKDYRIG (122 aa)) enclose the Peptidase C6 domain. Residues Cys737 and His809 each act as for helper component proteinase activity in the active site. A Helicase ATP-binding domain is found at 1278–1429 (NIATGAGNEF…CVPTNHKVDV (152 aa)). Residue 1291 to 1298 (GDVGSGKS) coordinates ATP. The DECH box motif lies at 1379–1382 (DECH). Positions 1444-1627 (SIDSHAEGLR…EVNFVTREQV (184 aa)) constitute a Helicase C-terminal domain. The Peptidase C4 domain occupies 2096–2311 (DDNYVPHSRC…ISWKGVPTNM (216 aa)). Active-site for nuclear inclusion protein A activity residues include His2140, Asp2174, and Cys2243. The 119-residue stretch at 2569 to 2687 (WKFIDADGSR…NAPQGVCETI (119 aa)) folds into the RdRp catalytic domain. The tract at residues 2818 to 2867 (HSGADQSGVVKDQTGDKAEGSGTKTEDPPNQTTDPVNNPSNGGNKDAPQN) is disordered. Basic and acidic residues predominate over residues 2830-2844 (QTGDKAEGSGTKTED). Polar residues predominate over residues 2845–2867 (PPNQTTDPVNNPSNGGNKDAPQN).

This sequence belongs to the potyviridae genome polyprotein family. Post-translationally, VPg is uridylylated by the polymerase and is covalently attached to the 5'-end of the genomic RNA. This uridylylated form acts as a nucleotide-peptide primer for the polymerase. In terms of processing, genome polyprotein of potyviruses undergoes post-translational proteolytic processing by the main proteinase NIa-pro resulting in the production of at least ten individual proteins. The P1 proteinase and the HC-pro cleave only their respective C-termini autocatalytically. 6K1 is essential for proper proteolytic separation of P3 from CI.

The protein localises to the host cytoplasmic vesicle. It is found in the virion. It catalyses the reaction RNA(n) + a ribonucleoside 5'-triphosphate = RNA(n+1) + diphosphate. The enzyme catalyses Hydrolyzes glutaminyl bonds, and activity is further restricted by preferences for the amino acids in P6 - P1' that vary with the species of potyvirus, e.g. Glu-Xaa-Xaa-Tyr-Xaa-Gln-|-(Ser or Gly) for the enzyme from tobacco etch virus. The natural substrate is the viral polyprotein, but other proteins and oligopeptides containing the appropriate consensus sequence are also cleaved.. The catalysed reaction is Hydrolyzes a Gly-|-Gly bond at its own C-terminus, commonly in the sequence -Tyr-Xaa-Val-Gly-|-Gly, in the processing of the potyviral polyprotein.. Required for aphid transmission and also has proteolytic activity. Only cleaves a Gly-Gly dipeptide at its own C-terminus. Interacts with virions and aphid stylets. Acts as a suppressor of RNA-mediated gene silencing, also known as post-transcriptional gene silencing (PTGS), a mechanism of plant viral defense that limits the accumulation of viral RNAs. May have RNA-binding activity. Functionally, has helicase activity. It may be involved in replication. Its function is as follows. Indispensable for virus replication. In terms of biological role, mediates the cap-independent, EIF4E-dependent translation of viral genomic RNAs. Binds to the cap-binding site of host EIF4E and thus interferes with the host EIF4E-dependent mRNA export and translation. VPg-RNA directly binds EIF4E and is a template for transcription. Also forms trimeric complexes with EIF4E-EIF4G, which are templates for translation. Has RNA-binding and proteolytic activities. Functionally, an RNA-dependent RNA polymerase that plays an essential role in the virus replication. Its function is as follows. Involved in aphid transmission, cell-to-cell and systemis movement, encapsidation of the viral RNA and in the regulation of viral RNA amplification. This chain is Genome polyprotein, found in Triticum aestivum (Wheat).